Reading from the N-terminus, the 312-residue chain is Testis-expressed protein 13B (312 aa).

This sequence belongs to the TEX13 family. Testis specific.

The sequence is that of Testis-expressed protein 13B (TEX13B) from Homo sapiens (Human).